A 306-amino-acid chain; its full sequence is uncharacterized protein (306 aa).

Asn208 carries an N-linked (GlcNAc...) asparagine glycan. The next 2 membrane-spanning stretches (helical) occupy residues 218–238 and 284–304; these read VFEI…VLFY and VMLV…KITK.

The protein localises to the membrane. This is an uncharacterized protein from Encephalitozoon cuniculi (strain GB-M1) (Microsporidian parasite).